The primary structure comprises 144 residues: Aspartate carbamoyltransferase regulatory chain (144 aa).

Residues cysteine 103, cysteine 108, cysteine 132, and cysteine 135 each contribute to the Zn(2+) site.

Belongs to the PyrI family. Contains catalytic and regulatory chains. It depends on Zn(2+) as a cofactor.

Functionally, involved in allosteric regulation of aspartate carbamoyltransferase. This chain is Aspartate carbamoyltransferase regulatory chain, found in Clostridium tetani (strain Massachusetts / E88).